Here is a 240-residue protein sequence, read N- to C-terminus: Chloroplastic group IIB intron splicing facilitator CRS2-B, chloroplastic (240 aa).

This sequence belongs to the PTH family. CRS2 subfamily. As to quaternary structure, part of large ribonucleo-protein complexes that include group IIB introns and either CAF1 or CAF2.

It localises to the plastid. It is found in the chloroplast stroma. Functionally, required for the splicing of group IIB introns in chloroplasts. In Arabidopsis thaliana (Mouse-ear cress), this protein is Chloroplastic group IIB intron splicing facilitator CRS2-B, chloroplastic (CRS2B).